A 138-amino-acid chain; its full sequence is Large-conductance mechanosensitive channel (138 aa).

3 consecutive transmembrane segments (helical) span residues Val15–Val35, Ile38–Gln58, and Gly80–Val100.

The protein belongs to the MscL family. Homopentamer.

The protein resides in the cell inner membrane. Functionally, channel that opens in response to stretch forces in the membrane lipid bilayer. May participate in the regulation of osmotic pressure changes within the cell. The sequence is that of Large-conductance mechanosensitive channel from Brucella ovis (strain ATCC 25840 / 63/290 / NCTC 10512).